The following is a 156-amino-acid chain: Small ribosomal subunit protein uS7 (156 aa).

The protein belongs to the universal ribosomal protein uS7 family. As to quaternary structure, part of the 30S ribosomal subunit. Contacts proteins S9 and S11.

In terms of biological role, one of the primary rRNA binding proteins, it binds directly to 16S rRNA where it nucleates assembly of the head domain of the 30S subunit. Is located at the subunit interface close to the decoding center, probably blocks exit of the E-site tRNA. The chain is Small ribosomal subunit protein uS7 from Prochlorococcus marinus (strain NATL2A).